Reading from the N-terminus, the 557-residue chain is 2-succinyl-5-enolpyruvyl-6-hydroxy-3-cyclohexene-1-carboxylate synthase (557 aa).

This sequence belongs to the TPP enzyme family. MenD subfamily. Homodimer. Mg(2+) is required as a cofactor. Mn(2+) serves as cofactor. The cofactor is thiamine diphosphate.

The enzyme catalyses isochorismate + 2-oxoglutarate + H(+) = 5-enolpyruvoyl-6-hydroxy-2-succinyl-cyclohex-3-ene-1-carboxylate + CO2. Its pathway is quinol/quinone metabolism; 1,4-dihydroxy-2-naphthoate biosynthesis; 1,4-dihydroxy-2-naphthoate from chorismate: step 2/7. The protein operates within quinol/quinone metabolism; menaquinone biosynthesis. Catalyzes the thiamine diphosphate-dependent decarboxylation of 2-oxoglutarate and the subsequent addition of the resulting succinic semialdehyde-thiamine pyrophosphate anion to isochorismate to yield 2-succinyl-5-enolpyruvyl-6-hydroxy-3-cyclohexene-1-carboxylate (SEPHCHC). The protein is 2-succinyl-5-enolpyruvyl-6-hydroxy-3-cyclohexene-1-carboxylate synthase of Serratia proteamaculans (strain 568).